The sequence spans 78 residues: Large ribosomal subunit protein bL28 (78 aa).

Residues Met1–Pro31 are disordered.

The protein belongs to the bacterial ribosomal protein bL28 family.

The protein is Large ribosomal subunit protein bL28 of Paenarthrobacter aurescens (strain TC1).